A 181-amino-acid chain; its full sequence is uncharacterized protein (181 aa).

Residues 25–47 are disordered; sequence ELANEVSAGDEEPYDDDIWESED. The span at 32 to 47 shows a compositional bias: acidic residues; that stretch reads AGDEEPYDDDIWESED. The helical transmembrane segment at 149-169 threads the bilayer; it reads ILTLILLSCGLLMLFIGYPIL.

The protein resides in the cytoplasm. It is found in the membrane. This is an uncharacterized protein from Schizosaccharomyces pombe (strain 972 / ATCC 24843) (Fission yeast).